A 211-amino-acid chain; its full sequence is Thymidylate kinase (211 aa).

Residue 10–17 (GVEGCGKT) participates in ATP binding.

Belongs to the thymidylate kinase family.

The catalysed reaction is dTMP + ATP = dTDP + ADP. In terms of biological role, phosphorylation of dTMP to form dTDP in both de novo and salvage pathways of dTTP synthesis. This is Thymidylate kinase from Nostoc punctiforme (strain ATCC 29133 / PCC 73102).